Reading from the N-terminus, the 59-residue chain is MSGRGFLLLALLLLVTVEATKVEKKHSGFLLAWSGPRNRFVRFGRRDMQSPLLSERLRL.

The signal sequence occupies residues 1–19 (MSGRGFLLLALLLLVTVEA). A propeptide spanning residues 20–25 (TKVEKK) is cleaved from the precursor. The interval 32–39 (AWSGPRNR) is positively charged region crucial for activity against MRGPRX1 receptors. At Phe-43 the chain carries Phenylalanine amide. The propeptide occupies 45 to 59 (RRDMQSPLLSERLRL).

Belongs to the FARP (FMRFamide related peptide) family. Expressed by the venom duct.

It localises to the secreted. Its function is as follows. This peptide activates human and mouse sensory neuron-specific G-protein coupled receptors MRGPRX1. The activity on human receptors has been measured (EC(50)=1.8 uM). Compared with the agonist chloroquine (anti-malaria drug), it is 200-fold more potent. The peptide also causes an increase in cytosolic calcium in a specific subset of DRG neurons, and, in contrast to other Conus venom peptides, the peptide also affects a large fraction of the non-neuronal cells. In vivo, when intracranially injected into mice, it principally renders mice unable to move, and at very low doses, it causes hyperactivity. It also induces itch sensation, since intradermal cheek injection into humanized transgenic mouse (mouse MRGPRX1 replaced by human MRGPRX1) induces scratching. In vivo, when tested at high doses (10 uM) on zebrafish larvae, it induces a range of behavioral effects ranging from an early hypoactivity during the first hour of treatment to an increase in movement during the following hours when the larvae are submitted to strobe light phases. This is Conorfamide-Vc1 from Conus victoriae (Queen Victoria cone).